The chain runs to 223 residues: Cytotoxic T-lymphocyte protein 4 (223 aa).

Residues 1-35 form the signal peptide; sequence MACLGFQRHKAQLNLATRTWPCTLLFFLLFIPVFC. The Extracellular portion of the chain corresponds to 36-161; it reads KAMHVAQPAV…IDPEPCPDSD (126 aa). The Ig-like V-type domain maps to 39 to 140; that stretch reads HVAQPAVVLA…VELMYPPPYY (102 aa). The tract at residues 46-50 is homodimerization; sequence VLASS. 2 disulfides stabilise this stretch: C58–C129 and C85–C103. N113 is a glycosylation site (N-linked (GlcNAc...) asparagine). Residues 134-139 form an important for interaction with CD80 and CD86 region; sequence MYPPPY. Residue N145 is glycosylated (N-linked (GlcNAc...) asparagine). A homodimerization region spans residues 150-155; sequence YVIDPE. A helical membrane pass occupies residues 162-182; it reads FLLWILAAVSSGLFFYSFLLT. Residues 183–223 are Cytoplasmic-facing; that stretch reads AVSLSKMLKKRSPLTTGVYVKMPPTEPECEKQFQPYFIPIN. Y201 carries the post-translational modification Phosphotyrosine; by TXK and JAK2.

As to quaternary structure, homodimer; disulfide-linked. Binds to CD80/B7-1 and CD86/B7.2. Interacts with ICOSLG. N-glycosylation is important for dimerization. In terms of processing, phosphorylation at Tyr-201 prevents binding to the AP-2 adapter complex, blocks endocytosis, and leads to retention of CTLA4 on the cell surface. Widely expressed with highest levels in lymphoid tissues. Detected in activated T-cells where expression levels are 30- to 50-fold less than CD28, the stimulatory coreceptor, on the cell surface following activation.

It localises to the cell membrane. In terms of biological role, inhibitory receptor acting as a major negative regulator of T-cell responses. The affinity of CTLA4 for its natural B7 family ligands, CD80 and CD86, is considerably stronger than the affinity of their cognate stimulatory coreceptor CD28. The sequence is that of Cytotoxic T-lymphocyte protein 4 (CTLA4) from Homo sapiens (Human).